We begin with the raw amino-acid sequence, 565 residues long: Periplasmic trehalase (565 aa).

Positions M1–A30 are cleaved as a signal peptide. Substrate is bound by residues R152, W159–D160, N196, R205–Q207, R277–E279, and G310. Catalysis depends on proton donor/acceptor residues D312 and E496. Residue E511 participates in substrate binding. The interval P538 to P565 is disordered. The segment covering T548–P565 has biased composition (polar residues).

Belongs to the glycosyl hydrolase 37 family. As to quaternary structure, monomer.

It localises to the periplasm. The catalysed reaction is alpha,alpha-trehalose + H2O = alpha-D-glucose + beta-D-glucose. Functionally, provides the cells with the ability to utilize trehalose at high osmolarity by splitting it into glucose molecules that can subsequently be taken up by the phosphotransferase-mediated uptake system. This is Periplasmic trehalase from Escherichia coli (strain K12 / MC4100 / BW2952).